A 352-amino-acid chain; its full sequence is Homocitrate synthase, omega subunit (352 aa).

Belongs to the alpha-IPM synthase/homocitrate synthase family. As to quaternary structure, heterodimer of an alpha and an omega chain.

The enzyme catalyses acetyl-CoA + 2-oxoglutarate + H2O = (2R)-homocitrate + CoA + H(+). Its function is as follows. This protein is a Fe-Mo-cofactor biosynthetic component. The polypeptide is Homocitrate synthase, omega subunit (nifV-OMEGA) (Clostridium pasteurianum).